Reading from the N-terminus, the 214-residue chain is Peptide methionine sulfoxide reductase MsrA 2 (214 aa).

Cys45 is a catalytic residue.

The protein belongs to the MsrA Met sulfoxide reductase family.

It catalyses the reaction L-methionyl-[protein] + [thioredoxin]-disulfide + H2O = L-methionyl-(S)-S-oxide-[protein] + [thioredoxin]-dithiol. It carries out the reaction [thioredoxin]-disulfide + L-methionine + H2O = L-methionine (S)-S-oxide + [thioredoxin]-dithiol. Has an important function as a repair enzyme for proteins that have been inactivated by oxidation. Catalyzes the reversible oxidation-reduction of methionine sulfoxide in proteins to methionine. The protein is Peptide methionine sulfoxide reductase MsrA 2 (msrA2) of Synechocystis sp. (strain ATCC 27184 / PCC 6803 / Kazusa).